The chain runs to 247 residues: 3-deoxy-manno-octulosonate cytidylyltransferase (247 aa).

The protein belongs to the KdsB family.

The protein resides in the cytoplasm. The catalysed reaction is 3-deoxy-alpha-D-manno-oct-2-ulosonate + CTP = CMP-3-deoxy-beta-D-manno-octulosonate + diphosphate. It functions in the pathway nucleotide-sugar biosynthesis; CMP-3-deoxy-D-manno-octulosonate biosynthesis; CMP-3-deoxy-D-manno-octulosonate from 3-deoxy-D-manno-octulosonate and CTP: step 1/1. The protein operates within bacterial outer membrane biogenesis; lipopolysaccharide biosynthesis. Functionally, activates KDO (a required 8-carbon sugar) for incorporation into bacterial lipopolysaccharide in Gram-negative bacteria. The chain is 3-deoxy-manno-octulosonate cytidylyltransferase from Methylobacterium nodulans (strain LMG 21967 / CNCM I-2342 / ORS 2060).